Here is a 327-residue protein sequence, read N- to C-terminus: Auxin-responsive protein IAA18 (327 aa).

Disordered stretches follow at residues 26–45 (VKEA…DEDK), 52–98 (GLPG…IGTT), and 180–202 (NLTN…DDKA). An EAR-like (transcriptional repression) motif is present at residues 49–53 (LKLGL). Over residues 58–69 (QEERAADSREKI) the composition is skewed to basic and acidic residues. Residues 70–82 (QQQQRESSSEPSI) are compositionally biased toward low complexity. Residues 180 to 189 (NLTNGSSFKQ) are compositionally biased toward polar residues. The span at 190–202 (SPERQNDEADDKA) shows a compositional bias: basic and acidic residues. A PB1 domain is found at 209 to 313 (RPLVKINMDG…TVKRLRVMRR (105 aa)).

The protein belongs to the Aux/IAA family. As to quaternary structure, homodimers and heterodimers. Highly expressed in flowers. Expressed in roots and etiolated seedlings.

Its subcellular location is the nucleus. Functionally, aux/IAA proteins are short-lived transcriptional factors that function as repressors of early auxin response genes at low auxin concentrations. The sequence is that of Auxin-responsive protein IAA18 (IAA18) from Oryza sativa subsp. japonica (Rice).